A 518-amino-acid chain; its full sequence is Pumilio homolog 14 (518 aa).

Disordered stretches follow at residues 26–46 (TMAS…QPEN) and 77–114 (VGQN…PPMG). The span at 29–44 (SSSSQPQPISSPFHQP) shows a compositional bias: low complexity. A PUM-HD domain is found at 178-518 (YTNRFGYEGY…GNKVLEKLNI (341 aa)). A Pumilio 1; degenerate repeat occupies 206 to 235 (SAFAKDKEMSERLGMSIFQGTKETVDAIYN). Pumilio repeat units follow at residues 236–271 (GLIG…QLVD), 275–313 (QQMF…RIVD), 314–348 (VVRT…LLLE), 349–387 (LIVQ…RLIM), 388–423 (EAIA…ALVR), 424–459 (QLIG…IVID), and 460–494 (LLRE…MLRY).

The protein resides in the cytoplasm. Its subcellular location is the nucleus. Functionally, sequence-specific RNA-binding protein that regulates translation and mRNA stability by binding the 3'-UTR of target mRNAs. This Arabidopsis thaliana (Mouse-ear cress) protein is Pumilio homolog 14 (APUM14).